The chain runs to 612 residues: Dihydroxy-acid dehydratase (612 aa).

Asp81 contacts Mg(2+). A [2Fe-2S] cluster-binding site is contributed by Cys122. Positions 123 and 124 each coordinate Mg(2+). At Lys124 the chain carries N6-carboxylysine. Residue Cys193 participates in [2Fe-2S] cluster binding. Glu489 is a binding site for Mg(2+). The active-site Proton acceptor is Ser515.

This sequence belongs to the IlvD/Edd family. Homodimer. It depends on [2Fe-2S] cluster as a cofactor. Mg(2+) is required as a cofactor.

The enzyme catalyses (2R)-2,3-dihydroxy-3-methylbutanoate = 3-methyl-2-oxobutanoate + H2O. The catalysed reaction is (2R,3R)-2,3-dihydroxy-3-methylpentanoate = (S)-3-methyl-2-oxopentanoate + H2O. The protein operates within amino-acid biosynthesis; L-isoleucine biosynthesis; L-isoleucine from 2-oxobutanoate: step 3/4. It participates in amino-acid biosynthesis; L-valine biosynthesis; L-valine from pyruvate: step 3/4. In terms of biological role, functions in the biosynthesis of branched-chain amino acids. Catalyzes the dehydration of (2R,3R)-2,3-dihydroxy-3-methylpentanoate (2,3-dihydroxy-3-methylvalerate) into 2-oxo-3-methylpentanoate (2-oxo-3-methylvalerate) and of (2R)-2,3-dihydroxy-3-methylbutanoate (2,3-dihydroxyisovalerate) into 2-oxo-3-methylbutanoate (2-oxoisovalerate), the penultimate precursor to L-isoleucine and L-valine, respectively. The protein is Dihydroxy-acid dehydratase of Stutzerimonas stutzeri (strain A1501) (Pseudomonas stutzeri).